The primary structure comprises 812 residues: ISWI one complex protein 2 (812 aa).

Disordered regions lie at residues 1-21 (MRTK…AGAA), 614-646 (MGNS…KRKP), 679-704 (AKQR…LEEL), and 762-812 (QTGS…PPTN). A compositionally biased stretch (polar residues) spans 627-638 (PQSTLEPSTKSS). A coiled-coil region spans residues 673–714 (ELKIIRAKQRKQQEDRERRKKMKEEKKRLEELAKKRELTESV). Basic and acidic residues predominate over residues 683–704 (KQQEDRERRKKMKEEKKRLEEL). Low complexity predominate over residues 769-796 (PQAPQAPQTSQASIQPQQQQQQQQQQQP).

Component of the ISW1B complex, which at least consists of ISW1, IOC2 and IOC4.

The protein localises to the nucleus. Functions as a component of the ISW1B complex, which acts in remodeling the chromatin by catalyzing an ATP-dependent alteration in the structure of nucleosomal DNA. The ISW1B complex acts within coding regions to control the amount of RNA polymerase II released into productive elongation and to coordinate elongation with termination and pre-mRNA processing. The protein is ISWI one complex protein 2 (IOC2) of Saccharomyces cerevisiae (strain ATCC 204508 / S288c) (Baker's yeast).